The chain runs to 246 residues: uncharacterized protein (246 aa).

The protein to M.jannaschii MJ1676.

This is an uncharacterized protein from Methanothermobacter thermautotrophicus (strain ATCC 29096 / DSM 1053 / JCM 10044 / NBRC 100330 / Delta H) (Methanobacterium thermoautotrophicum).